A 47-amino-acid chain; its full sequence is Protein YqgG (47 aa).

This Escherichia coli (strain K12) protein is Protein YqgG.